The following is a 602-amino-acid chain: UPF0329 protein ECU02_0060 (602 aa).

The segment covering 313–345 (EEDERKRAEAESARNREELLRMEEREKGKEKGS) has biased composition (basic and acidic residues). The disordered stretch occupies residues 313–407 (EEDERKRAEA…SPKEESKGEE (95 aa)). Positions 346 to 356 (KGKGRKKRGKK) are enriched in basic residues. Basic and acidic residues predominate over residues 357–369 (GAGEAKEESKEED). Positions 370–384 (RGGEEEESVEADVPV) are enriched in acidic residues.

This sequence belongs to the UPF0329 family.

This Encephalitozoon cuniculi (strain GB-M1) (Microsporidian parasite) protein is UPF0329 protein ECU02_0060.